Consider the following 479-residue polypeptide: Ribosomal RNA small subunit methyltransferase F (479 aa).

S-adenosyl-L-methionine contacts are provided by residues 125–131, E149, D176, and D194; that span reads AAAPGSK. C247 serves as the catalytic Nucleophile.

This sequence belongs to the class I-like SAM-binding methyltransferase superfamily. RsmB/NOP family.

It is found in the cytoplasm. It carries out the reaction cytidine(1407) in 16S rRNA + S-adenosyl-L-methionine = 5-methylcytidine(1407) in 16S rRNA + S-adenosyl-L-homocysteine + H(+). Functionally, specifically methylates the cytosine at position 1407 (m5C1407) of 16S rRNA. The polypeptide is Ribosomal RNA small subunit methyltransferase F (Escherichia coli O157:H7 (strain EC4115 / EHEC)).